We begin with the raw amino-acid sequence, 610 residues long: L-galactono-1,4-lactone dehydrogenase, mitochondrial (610 aa).

The N-terminal 35 residues, 1-35 (MLRSLLLRRSVGHSLGTLSPSSSTIRSSFSPHRTL), are a transit peptide targeting the mitochondrion. A disordered region spans residues 17 to 61 (TLSPSSSTIRSSFSPHRTLCTTGQTLTPPPPPPPRPPPPPPATAS). The span at 19–30 (SPSSSTIRSSFS) shows a compositional bias: low complexity. Positions 36-101 (CTTGQTLTPP…AKHKKAQIFR (66 aa)) are cleaved as a propeptide — removed in mature form. Pro residues predominate over residues 43 to 58 (TPPPPPPPRPPPPPPA). The helical transmembrane segment at 68 to 84 (YAGYAALAIFSGVATYF) threads the bilayer. The FAD-binding PCMH-type domain occupies 123–258 (TRNFNQPENL…TPAKGTIELS (136 aa)).

Requires FAD as cofactor.

It localises to the mitochondrion membrane. The enzyme catalyses L-galactono-1,4-lactone + 4 Fe(III)-[cytochrome c] = L-dehydroascorbate + 4 Fe(II)-[cytochrome c] + 5 H(+). It catalyses the reaction L-gulono-1,4-lactone + 2 Fe(III)-[cytochrome c] = L-ascorbate + 2 Fe(II)-[cytochrome c] + 3 H(+). Its pathway is cofactor biosynthesis; L-ascorbate biosynthesis. Involved in the biosynthesis of ascorbate. Catalyzes the final step of ascorbate biosynthesis. Uses L-galactono-1,4-lactone and L-gulono-1,4-lactone as substrates, but not D-galactono-1,4-lactone, D-gulono-1,4-lactone, L-mannono-1,4-lactone or D-galactonic acid. Also active with phenazine methosulfate and 1,4-benzoquinone as electron acceptors. Involved in the regulation of the accumulation of the mitochondrial respiratory complex I. Structural part of one of the plant-specific mitochondrial complex I assembly intermediates, lacking the whole distal (PD) module. Prevents the binding of the plant specific P1 protein (CPN60/HSP60), responsible for the linkage of the proximal (PP) to the distal (PD) module. This is L-galactono-1,4-lactone dehydrogenase, mitochondrial from Arabidopsis thaliana (Mouse-ear cress).